Reading from the N-terminus, the 84-residue chain is DNA-directed RNA polymerase subunit Rpo5 (84 aa).

It belongs to the archaeal Rpo5/eukaryotic RPB5 RNA polymerase subunit family. In terms of assembly, part of the RNA polymerase complex.

The protein resides in the cytoplasm. The enzyme catalyses RNA(n) + a ribonucleoside 5'-triphosphate = RNA(n+1) + diphosphate. Its function is as follows. DNA-dependent RNA polymerase (RNAP) catalyzes the transcription of DNA into RNA using the four ribonucleoside triphosphates as substrates. This is DNA-directed RNA polymerase subunit Rpo5 from Sulfurisphaera tokodaii (strain DSM 16993 / JCM 10545 / NBRC 100140 / 7) (Sulfolobus tokodaii).